The sequence spans 183 residues: NADH-quinone oxidoreductase subunit B 2 (183 aa).

[4Fe-4S] cluster is bound by residues C47, C48, C113, and C142.

Belongs to the complex I 20 kDa subunit family. As to quaternary structure, NDH-1 is composed of 14 different subunits. Subunits NuoB, C, D, E, F, and G constitute the peripheral sector of the complex. [4Fe-4S] cluster is required as a cofactor.

The protein localises to the cell inner membrane. It catalyses the reaction a quinone + NADH + 5 H(+)(in) = a quinol + NAD(+) + 4 H(+)(out). In terms of biological role, NDH-1 shuttles electrons from NADH, via FMN and iron-sulfur (Fe-S) centers, to quinones in the respiratory chain. The immediate electron acceptor for the enzyme in this species is believed to be ubiquinone. Couples the redox reaction to proton translocation (for every two electrons transferred, four hydrogen ions are translocated across the cytoplasmic membrane), and thus conserves the redox energy in a proton gradient. The protein is NADH-quinone oxidoreductase subunit B 2 of Anaeromyxobacter sp. (strain Fw109-5).